Here is a 318-residue protein sequence, read N- to C-terminus: MGGVIKNISTFVLIVEFIIGNLGNSFIALVNCIDWVKRRKISLVDQLLTALAISRISLVWLIFGSWCVSAFFPALFATEKMFRMLTNIWAVTNHFSVWLATGLGTFYFLKIANFSNSIFIYLKWRVKKVVLVLLLVTSVFLFLNIALINIHINASINGYGGNKTCSSDSNDFTRFSSLIALTSSVFIFIPFILSLAIFLLLTFSLWKHCKKMQHTVKASGDASTKAHRGVMQTVIAFLLLYPIFSLSFFIAVWTSGWLEENLIILSQVMGMAYPSCHSCILILGNKKLRQASLSVLWWLKYRFKDGEPSGHKGFRESS.

Residues 1-7 (MGGVIKN) are Extracellular-facing. The chain crosses the membrane as a helical span at residues 8 to 28 (ISTFVLIVEFIIGNLGNSFIA). Residues 29–55 (LVNCIDWVKRRKISLVDQLLTALAISR) lie on the Cytoplasmic side of the membrane. The helical transmembrane segment at 56 to 76 (ISLVWLIFGSWCVSAFFPALF) threads the bilayer. Residues 77–87 (ATEKMFRMLTN) lie on the Extracellular side of the membrane. 2 residues coordinate cholesterol: Thr-86 and Trp-89. The helical transmembrane segment at 88-108 (IWAVTNHFSVWLATGLGTFYF) threads the bilayer. At 109-129 (LKIANFSNSIFIYLKWRVKKV) the chain is on the cytoplasmic side. The chain crosses the membrane as a helical span at residues 130–150 (VLVLLLVTSVFLFLNIALINI). The Extracellular segment spans residues 151 to 184 (HINASINGYGGNKTCSSDSNDFTRFSSLIALTSS). Asn-153 and Asn-162 each carry an N-linked (GlcNAc...) asparagine glycan. Ala-180 lines the cholesterol pocket. The chain crosses the membrane as a helical span at residues 185-205 (VFIFIPFILSLAIFLLLTFSL). Residues 206 to 232 (WKHCKKMQHTVKASGDASTKAHRGVMQ) are Cytoplasmic-facing. The helical transmembrane segment at 233-253 (TVIAFLLLYPIFSLSFFIAVW) threads the bilayer. The Extracellular portion of the chain corresponds to 254-261 (TSGWLEEN). A helical transmembrane segment spans residues 262-282 (LIILSQVMGMAYPSCHSCILI). Positions 265 and 268 each coordinate cholesterol. Topologically, residues 283–317 (LGNKKLRQASLSVLWWLKYRFKDGEPSGHKGFRES) are cytoplasmic.

It belongs to the G-protein coupled receptor T2R family. Core component of the TAS2R14-GNAI1 complex, consisting of TAS2R14, GNAI1, GNB1 and GNG2; within the complex interacts with GNAI1. Core component of the TAS2R14-GNAT3 complex, consisting of TAS2R14, GNAT3, GNB1 and GNG2; within the complex interacts with GNAT3. Core component of the TAS2R14-GNAS2 complex, consisting of TAS2R14, GNAS2, GNB1 and GNG2; within the complex interacts with GNAS2.

Its subcellular location is the membrane. It catalyses the reaction Ca(2+)(in) = Ca(2+)(out). It carries out the reaction 3',5'-cyclic AMP(in) = 3',5'-cyclic AMP(out). Basal activity is enhanced by binding to bitter tastants, such as flufenamic acid and aristolochic acid. Regulated by cholesterol in a concentration-dependent manner. Gustducin-linked G-protein coupled receptor that plays a role in the perception of bitterness. The activity of this receptor stimulates GNAT3, activating the gustducin G-protein pathway. Likely plays a role in sensing the chemical composition of the gastrointestinal content and other extra-oral tissues via the inhibitory G-protein pathways. The protein is Taste receptor type 2 member 14 (TAS2R14) of Pongo pygmaeus (Bornean orangutan).